A 940-amino-acid polypeptide reads, in one-letter code: Isoleucine--tRNA ligase (940 aa).

The short motif at 58-68 is the 'HIGH' region element; it reads PYANGSIHIGH. An L-isoleucyl-5'-AMP-binding site is contributed by Glu-564. A 'KMSKS' region motif is present at residues 605–609; it reads KMSKS. Residue Lys-608 participates in ATP binding. The Zn(2+) site is built by Cys-903, Cys-906, Cys-923, and Cys-926.

This sequence belongs to the class-I aminoacyl-tRNA synthetase family. IleS type 1 subfamily. As to quaternary structure, monomer. Requires Zn(2+) as cofactor.

The protein resides in the cytoplasm. It catalyses the reaction tRNA(Ile) + L-isoleucine + ATP = L-isoleucyl-tRNA(Ile) + AMP + diphosphate. Its function is as follows. Catalyzes the attachment of isoleucine to tRNA(Ile). As IleRS can inadvertently accommodate and process structurally similar amino acids such as valine, to avoid such errors it has two additional distinct tRNA(Ile)-dependent editing activities. One activity is designated as 'pretransfer' editing and involves the hydrolysis of activated Val-AMP. The other activity is designated 'posttransfer' editing and involves deacylation of mischarged Val-tRNA(Ile). This is Isoleucine--tRNA ligase from Shewanella sp. (strain ANA-3).